Reading from the N-terminus, the 310-residue chain is Antiviral protein II/III (310 aa).

Positions 1–25 (MKMKVLEVVGLAISIWLMLTPPASS) are cleaved as a signal peptide. Intrachain disulfides connect Cys-57–Cys-284 and Cys-106–Cys-123. Tyr-94 is a catalytic residue. Active-site residues include Tyr-142, Glu-197, and Arg-200.

The protein belongs to the ribosome-inactivating protein family. Type 1 RIP subfamily. In terms of tissue distribution, PAP-II is expressed in early summer leaves (at protein level). PAP-III is expressed in late summer leaves (at protein level).

It catalyses the reaction Endohydrolysis of the N-glycosidic bond at one specific adenosine on the 28S rRNA.. Possesses antiviral potency. Inhibits viral infection of plants (tobacco mosaic virus). Inhibits protein synthesis in both prokaryotes and eukaryotes. The chain is Antiviral protein II/III (PAP2) from Phytolacca americana (American pokeweed).